The sequence spans 557 residues: Dihydroxy-acid dehydratase 1 (557 aa).

Residue cysteine 50 participates in [2Fe-2S] cluster binding. Aspartate 82 provides a ligand contact to Mg(2+). Position 123 (cysteine 123) interacts with [2Fe-2S] cluster. Positions 124 and 125 each coordinate Mg(2+). At lysine 125 the chain carries N6-carboxylysine. Residue cysteine 195 coordinates [2Fe-2S] cluster. Mg(2+) is bound at residue glutamate 447. The active-site Proton acceptor is the serine 473.

Belongs to the IlvD/Edd family. In terms of assembly, homodimer. The cofactor is [2Fe-2S] cluster. Requires Mg(2+) as cofactor.

The enzyme catalyses (2R)-2,3-dihydroxy-3-methylbutanoate = 3-methyl-2-oxobutanoate + H2O. The catalysed reaction is (2R,3R)-2,3-dihydroxy-3-methylpentanoate = (S)-3-methyl-2-oxopentanoate + H2O. The protein operates within amino-acid biosynthesis; L-isoleucine biosynthesis; L-isoleucine from 2-oxobutanoate: step 3/4. Its pathway is amino-acid biosynthesis; L-valine biosynthesis; L-valine from pyruvate: step 3/4. In terms of biological role, functions in the biosynthesis of branched-chain amino acids. Catalyzes the dehydration of (2R,3R)-2,3-dihydroxy-3-methylpentanoate (2,3-dihydroxy-3-methylvalerate) into 2-oxo-3-methylpentanoate (2-oxo-3-methylvalerate) and of (2R)-2,3-dihydroxy-3-methylbutanoate (2,3-dihydroxyisovalerate) into 2-oxo-3-methylbutanoate (2-oxoisovalerate), the penultimate precursor to L-isoleucine and L-valine, respectively. This Cupriavidus pinatubonensis (strain JMP 134 / LMG 1197) (Cupriavidus necator (strain JMP 134)) protein is Dihydroxy-acid dehydratase 1.